The sequence spans 231 residues: 5'-methylthioadenosine/S-adenosylhomocysteine nucleosidase (231 aa).

The Proton acceptor role is filled by Glu-13. Substrate contacts are provided by residues Gly-79, Met-153, and 174–175; that span reads ME. Asp-198 functions as the Proton donor in the catalytic mechanism.

The protein belongs to the PNP/UDP phosphorylase family. MtnN subfamily.

It catalyses the reaction S-adenosyl-L-homocysteine + H2O = S-(5-deoxy-D-ribos-5-yl)-L-homocysteine + adenine. The catalysed reaction is S-methyl-5'-thioadenosine + H2O = 5-(methylsulfanyl)-D-ribose + adenine. The enzyme catalyses 5'-deoxyadenosine + H2O = 5-deoxy-D-ribose + adenine. It functions in the pathway amino-acid biosynthesis; L-methionine biosynthesis via salvage pathway; S-methyl-5-thio-alpha-D-ribose 1-phosphate from S-methyl-5'-thioadenosine (hydrolase route): step 1/2. Catalyzes the irreversible cleavage of the glycosidic bond in both 5'-methylthioadenosine (MTA) and S-adenosylhomocysteine (SAH/AdoHcy) to adenine and the corresponding thioribose, 5'-methylthioribose and S-ribosylhomocysteine, respectively. Also cleaves 5'-deoxyadenosine, a toxic by-product of radical S-adenosylmethionine (SAM) enzymes, into 5-deoxyribose and adenine. This Halalkalibacterium halodurans (strain ATCC BAA-125 / DSM 18197 / FERM 7344 / JCM 9153 / C-125) (Bacillus halodurans) protein is 5'-methylthioadenosine/S-adenosylhomocysteine nucleosidase.